The chain runs to 552 residues: Non-structural protein NS1 (552 aa).

This sequence belongs to the orbivirus non-structural protein NS1 family.

This Bluetongue virus 1 (isolate Australia) (BTV 1) protein is Non-structural protein NS1 (Segment-5).